A 931-amino-acid chain; its full sequence is Netrin receptor UNC5C (931 aa).

The first 40 residues, 1–40 (MRKGLRATAARCGLGLGYLLQMLVLPALALLSASGTGSAA), serve as a signal peptide directing secretion. Over 41–380 (QDDEFFHELP…APDSDDVALY (340 aa)) the chain is Extracellular. An Ig-like domain is found at 62 to 159 (PHFLIEPEEA…AGTTKSRKAY (98 aa)). Intrachain disulfides connect C83–C144, C95–C142, C188–C239, C272–C309, C276–C313, C287–C299, C328–C362, C332–C367, and C340–C352. Residues 161–256 (RIAYLRKTFE…KRKSTTATVI (96 aa)) form the Ig-like C2-type domain. N-linked (GlcNAc...) asparagine glycosylation occurs at N236. 2 TSP type-1 domains span residues 260 to 314 (NGGW…TLCP) and 316 to 368 (DGRW…GLCM). An N-linked (GlcNAc...) asparagine glycan is attached at N361. Residues 381–401 (VGIVIAVTVCLAITVVVALFV) form a helical membrane-spanning segment. At 402-931 (YRKNHRDFES…VVSLAAEGQY (530 aa)) the chain is on the cytoplasmic side. Residues 402-931 (YRKNHRDFES…VVSLAAEGQY (530 aa)) form a required for netrin-mediated axon repulsion of neuronal growth cones region. S502 is subject to Phosphoserine. Residues 530-673 (CTAFGTFNSL…LSTYALVGQS (144 aa)) enclose the ZU5 domain. Residue Y568 is modified to Phosphotyrosine. The interaction with DCC stretch occupies residues 694-712 (SLEYSIRVYCLDDTQDALK). The Death domain maps to 850 to 929 (QKLCSSLDAP…ETVVSLAAEG (80 aa)).

It belongs to the unc-5 family. As to quaternary structure, interacts with DCC (via cytoplasmic domain). Interacts (tyrosine phosphorylated form) with PTPN11. Interacts (via extracellular domain) with FLRT3 (via extracellular domain). Interacts (via Ig-like C2-type domain) with DSCAM (via extracellular domain). Interacts (via death domain) with DAPK1. Interacts (via cytoplasmic domain) with TUBB3; this interaction is decreased by NTN1/Netrin-1. In terms of processing, phosphorylated on different cytoplasmic tyrosine residues. Phosphorylation of Tyr-568 leads to an interaction with PTPN11 phosphatase, suggesting that its activity is regulated by phosphorylation/dephosphorylation. Tyrosine phosphorylation is netrin-dependent. Proteolytically cleaved by caspases during apoptosis. The cleavage does not take place when the receptor is associated with netrin ligand. Its cleavage by caspases is required to induce apoptosis. In terms of tissue distribution, expressed in cortical and cerebellar neurons, including cells of the external and internal granular layer and of the Purkinje cell layer (at protein level). Mainly expressed in regions of differentiating neurons. Highly expressed in brain and lung. Expressed in the cerebellum and the neurons of the hippocampus, with enrichment in neurons of the CA3 hippocampal pyramidal layer. Weakly expressed in testis, ovary, spleen, thymus and bladder. Expressed at very low level in kidney, intestine and salivary gland.

Its subcellular location is the cell membrane. It is found in the cell surface. It localises to the synapse. The protein resides in the synaptosome. The protein localises to the cell projection. Its subcellular location is the dendrite. It is found in the axon. It localises to the growth cone. The protein resides in the lamellipodium. The protein localises to the filopodium. In terms of biological role, receptor for netrin required for axon guidance. Mediates axon repulsion of neuronal growth cones in the developing nervous system upon ligand binding. NTN1/Netrin-1 binding might cause dissociation of UNC5C from polymerized TUBB3 in microtubules and thereby lead to increased microtubule dynamics and axon repulsion. Axon repulsion in growth cones may also be caused by its association with DCC that may trigger signaling for repulsion. Might also collaborate with DSCAM in NTN1-mediated axon repulsion independently of DCC. Also involved in corticospinal tract axon guidance independently of DCC. Involved in dorsal root ganglion axon projection towards the spinal cord. It also acts as a dependence receptor required for apoptosis induction when not associated with netrin ligand. This is Netrin receptor UNC5C (Unc5c) from Mus musculus (Mouse).